A 336-amino-acid chain; its full sequence is MYYPFVRKALFQLDPERAHEFTFQQLRRITGTPLEALVRQKVPTKPVTCMGLTFKNPLGLAAGLDKDGECIDALDAMGFGSLEIGTVTPRPQPGNDKPRLFRLVDAEGLINRMGFNNLGVDNLVENVKKAHFDGILGINIGKNKDTPVENGKDDYLICMEKVYAYAGYIAINISSPNTLGLRTLQYGDALDDLLTAIKNKQNDLQAIHHKYVPVAVKIAPDLCEEELIQVADSLLRHNIDGVIATNTTLDRSLVQGMKNCQQTGGLSGRPLQLKSTEIIRRLSQELKGQLPIIGVGGIDSVIAAREKIAAGATLVQIYSGFIFKGPPLIKEIVTHI.

FMN contacts are provided by residues 62 to 66 (AGLDK) and threonine 86. Substrate is bound at residue lysine 66. 111 to 115 (NRMGF) is a substrate binding site. Positions 139 and 172 each coordinate FMN. Asparagine 172 is a substrate binding site. Catalysis depends on serine 175, which acts as the Nucleophile. Asparagine 177 is a binding site for substrate. Residues lysine 217 and threonine 245 each contribute to the FMN site. Position 246–247 (246–247 (NT)) interacts with substrate. Residues glycine 268, glycine 297, and 318–319 (YS) contribute to the FMN site.

This sequence belongs to the dihydroorotate dehydrogenase family. Type 2 subfamily. Monomer. It depends on FMN as a cofactor.

The protein localises to the cell membrane. The catalysed reaction is (S)-dihydroorotate + a quinone = orotate + a quinol. Its pathway is pyrimidine metabolism; UMP biosynthesis via de novo pathway; orotate from (S)-dihydroorotate (quinone route): step 1/1. Functionally, catalyzes the conversion of dihydroorotate to orotate with quinone as electron acceptor. The protein is Dihydroorotate dehydrogenase (quinone) of Salmonella choleraesuis (strain SC-B67).